The sequence spans 368 residues: Mitogen-activated protein kinase 7 (368 aa).

Positions 32–319 (YVPIKPIGRG…VTDALLHPYM (288 aa)) constitute a Protein kinase domain. ATP is bound by residues 38 to 46 (IGRGAYGVV) and Lys-61. Asp-158 functions as the Proton acceptor in the catalytic mechanism. Residue Thr-191 is modified to Phosphothreonine. The TXY motif lies at 191–193 (TEY). Tyr-193 is subject to Phosphotyrosine. Residue Thr-196 is modified to Phosphothreonine.

This sequence belongs to the protein kinase superfamily. CMGC Ser/Thr protein kinase family. MAP kinase subfamily. Interacts with MKK3. Mg(2+) serves as cofactor. Dually phosphorylated on Thr-191 and Tyr-193, which activates the enzyme.

The catalysed reaction is L-seryl-[protein] + ATP = O-phospho-L-seryl-[protein] + ADP + H(+). It catalyses the reaction L-threonyl-[protein] + ATP = O-phospho-L-threonyl-[protein] + ADP + H(+). With respect to regulation, activated by threonine and tyrosine phosphorylation. Activated in response to hydrogen peroxide. Activation is triggered by MAPKKK17 and MAPKKK18 in a MKK3-dependent manner. MKK3-MPK7 module acts as a positive regulator of PR1 gene expression. The polypeptide is Mitogen-activated protein kinase 7 (MPK7) (Arabidopsis thaliana (Mouse-ear cress)).